The chain runs to 218 residues: MAARSPSVVISDDEPGYDLNLFCIPNHYAEDLEKVFIPHGLIMDRTERLARDVMKEMGGHHIVALCVLKGGYKFFADLLDYIKALNRNSDKSIPMTVDFIRLKSYCNDQSTGDIKVIGGDDLSTLTGKNVLIVEDIIDTGKTMQTLLALVKKHKPKMVKVASLLMKRTPRSVGYKPDFVGFEIPDKFVVGYALDYNEYFRDLNHVCVISETGKAKYKA.

A2 bears the N-acetylalanine mark. GMP is bound at residue K69. At K103 the chain carries N6-acetyllysine. K115 participates in a covalent cross-link: Glycyl lysine isopeptide (Lys-Gly) (interchain with G-Cter in SUMO1); alternate. A Glycyl lysine isopeptide (Lys-Gly) (interchain with G-Cter in SUMO2); alternate cross-link involves residue K115. Residues 134-142 (EDIIDTGKT), K166, 186-188 (KFV), and D194 contribute to the GMP site. The active-site Proton acceptor is D138. At T142 the chain carries Phosphothreonine. D194 provides a ligand contact to Mg(2+).

The protein belongs to the purine/pyrimidine phosphoribosyltransferase family. Homotetramer. The cofactor is Mg(2+).

Its subcellular location is the cytoplasm. It catalyses the reaction IMP + diphosphate = hypoxanthine + 5-phospho-alpha-D-ribose 1-diphosphate. The enzyme catalyses GMP + diphosphate = guanine + 5-phospho-alpha-D-ribose 1-diphosphate. Its pathway is purine metabolism; IMP biosynthesis via salvage pathway; IMP from hypoxanthine: step 1/1. Its function is as follows. Converts guanine to guanosine monophosphate, and hypoxanthine to inosine monophosphate. Transfers the 5-phosphoribosyl group from 5-phosphoribosylpyrophosphate onto the purine. Plays a central role in the generation of purine nucleotides through the purine salvage pathway. The chain is Hypoxanthine-guanine phosphoribosyltransferase (HPRT1) from Bos taurus (Bovine).